A 317-amino-acid polypeptide reads, in one-letter code: Inactive serine protease 45 (317 aa).

The first 35 residues, 1-35 (MATSLRGLDAGPGSLRRWILICFAALLLLPPRPNL), serve as a signal peptide directing secretion. Residue N40 is glycosylated (N-linked (GlcNAc...) asparagine). Positions 44 to 291 (PVCGTPWWPD…YTIWIKDQVS (248 aa)) constitute a Peptidase S1 domain. A disulfide bond links C75 and C91. N-linked (GlcNAc...) asparagine glycosylation is present at N110. 3 disulfide bridges follow: C172-C249, C207-C230, and C239-C267. N-linked (GlcNAc...) asparagine glycosylation occurs at N272.

The protein belongs to the peptidase S1 family.

The protein localises to the secreted. This is Inactive serine protease 45 from Mus musculus (Mouse).